The chain runs to 212 residues: Suppressor of cytokine signaling 1 (212 aa).

The segment at 1-55 (MVARNQVAADNAISPAAEPRRRSEPSSSSSSSSPAAPVRPRPCPAVPAPAPGDTH) is disordered. Low complexity predominate over residues 25–36 (PSSSSSSSSPAA). Residues 37 to 50 (PVRPRPCPAVPAPA) show a composition bias toward pro residues. The interval 56 to 67 (FRTFRSHSDYRR) is kinase inhibitory region (KIR). The tract at residues 68–79 (ITRTSALLDACG) is extended SH2 subdomain (ESS). One can recognise an SH2 domain in the interval 80–175 (FYWGPLSVHG…PLRQRRVRPL (96 aa)). An SOCS box domain is found at 162-211 (MLGAPLRQRRVRPLQELCRQRIVAAVGRENLARIPLNPVLRDYLSSFPFQ). Residues 174–183 (PLQELCRQRI) form an interaction with Elongin BC complex region.

This sequence belongs to the SOCS1 family. As to quaternary structure, interacts with multiple activated proteins of the tyrosine kinase signaling pathway including JAK family kinases, TEC, KIT, GRB2 and VAV. Binding to JAKs is mediated through the KIR and SH2 domain to a phosphorylated tyrosine residue within the JAK JH1 domain. Binds the SH3 domain of GRB2 via diproline determinants in the N-terminus, and the N-terminal regulatory domain of VAV. Interacts with the Elongin BC complex (ELOB and ELOC). Component of an ECS CBC(SOCS1) E3 ubiquitin-protein ligase complex which contains Elongin BC, CUL5, RBX1 and SOCS1. Interacts (via SH2 domain and SOCS box) with TRIM8. Interacts with CUL2. Interacts with AXL and FGFR3. Interacts with INSR. Interacts with TRIM8. Interacts with DCUN1D1. Interacts with IFNGR1. High expression in thymus. Lower expression in lung and spleen. Expressed in both Th1 and Th2 cells.

The protein localises to the nucleus. Its subcellular location is the cytoplasmic vesicle. The protein operates within protein modification; protein ubiquitination. Essential negative regulator of type I and type II interferon (IFN) signaling, as well as that of other cytokines, including IL2, IL4, IL6 and leukemia inhibitory factor (LIF). Downregulates cytokine signaling by inhibiting the JAK/STAT signaling pathway. Acts by binding to JAK proteins and to IFNGR1 and inhibiting their kinase activity. In vitro, suppresses Tec protein-tyrosine activity. Regulates IFN-gamma (IFNG)-mediated sensory neuron survival. Probable substrate recognition component of an ECS (Elongin BC-CUL2/5-SOCS-box protein) E3 ubiquitin ligase complex which mediates the ubiquitination and subsequent proteasomal degradation of target proteins. In Mus musculus (Mouse), this protein is Suppressor of cytokine signaling 1.